Reading from the N-terminus, the 148-residue chain is Cofilin/actin-depolymerizing factor homolog (148 aa).

Positions 4 to 143 constitute an ADF-H domain; sequence GVTVSDVCKT…SREAVEEKLR (140 aa). The Nuclear localization signal motif lies at 19-23; that stretch reads KKDKK.

The protein belongs to the actin-binding proteins ADF family. Phosphorylated in vitro by protein kinase LIMK1. Phosphorylation is required for inactivation of tsr and for cell proliferation and axon growth. Phosphorylation is negatively regulated by the panthothenate kinase fbl which catalyzes the first step in the conversion of panthothenic acid to coenzyme A. In terms of processing, dephosphorylated by protein phosphatase ssh which activates tsr.

The protein resides in the cytoplasm. It localises to the cytoskeleton. The protein localises to the nucleus matrix. In terms of biological role, exhibits F-actin depolymerizing activity and regulates actin cytoskeleton dynamics. Required for cytokinesis in both mitotic and meiotic cells and for aster migration and separation. Promotes cell motility during ovary development and oogenesis. During larval development, required for the cell rearrangement needed for formation of terminal filaments which are stacks of somatic cells that are important for the initiation of ovarioles. Also required for border cell migration during oogenesis. During border cell migration, required for actin turnover and lamellipodial protrusion. Required for the establishment of planar cell polarity (PCP) where cells adopt a uniform orientation within the plane of an epithelium. During establishment of PCP, required for the redistribution of the PCP core proteins fz and stan/fmi to the proximodistal cell boundary. During pupal development, required for elongation of the retinal cell body and for rhabdomere morphogenesis. Required for mushroom body neuroblast proliferation and axon growth. Plays a role in the positive regulation of protein secretion. Plays a role in the regulation of nuclear localization of actin. Required for the maintenance of epithelial integrity by controlling cell junctions and is also necessary for cell survival and tissue growth through regulation of JNK and yki signaling. In Drosophila melanogaster (Fruit fly), this protein is Cofilin/actin-depolymerizing factor homolog.